Consider the following 220-residue polypeptide: Sec-independent protein translocase protein TatB (220 aa).

Residues 1-21 (MFDIGFSELLLVLVIGLVVLG) form a helical membrane-spanning segment. The tract at residues 192-220 (KQQIDTIDSHGTDLSSAGPSRIHQPGGDQ) is disordered.

This sequence belongs to the TatB family. In terms of assembly, the Tat system comprises two distinct complexes: a TatABC complex, containing multiple copies of TatA, TatB and TatC subunits, and a separate TatA complex, containing only TatA subunits. Substrates initially bind to the TatABC complex, which probably triggers association of the separate TatA complex to form the active translocon.

The protein resides in the cell inner membrane. Functionally, part of the twin-arginine translocation (Tat) system that transports large folded proteins containing a characteristic twin-arginine motif in their signal peptide across membranes. Together with TatC, TatB is part of a receptor directly interacting with Tat signal peptides. TatB may form an oligomeric binding site that transiently accommodates folded Tat precursor proteins before their translocation. The polypeptide is Sec-independent protein translocase protein TatB (Yersinia pestis bv. Antiqua (strain Antiqua)).